A 318-amino-acid chain; its full sequence is Isoflavone reductase (318 aa).

Residues 11–17 (GPTGAIG), arginine 36, and lysine 44 each bind NADP(+). Lysine 144 acts as the Proton acceptor in catalysis. An NADP(+)-binding site is contributed by arginine 148.

The protein belongs to the NmrA-type oxidoreductase family. Isoflavone reductase subfamily.

It catalyses the reaction (3R)-vestitone + NADP(+) = 2'-hydroxyformononetin + NADPH + 2 H(+). It functions in the pathway phytoalexin biosynthesis; pterocarpan phytoalexin biosynthesis. Functionally, reduces achiral isoflavones to chiral isoflavanones during the biosynthesis of chiral pterocarpan phytoalexins. The reduction product is a third isomer, which represents the penultimate intermediate in the synthesis of the phytoalexin (-)-medicarpin, the major phytoalexin in Alfalfa. In Medicago sativa (Alfalfa), this protein is Isoflavone reductase.